The sequence spans 227 residues: MAYPFQLGLQDATSPIMEELLHFHDHTLMIVFLISSLVLYIISSMLTTKLTHTSTMDAQEVETVWTILPAIILVLIALPSLRILYMMDETNNPSLTVKTMGHQWYWSYEYTDYEDLNFDSYMIPTQELKPGELRLLEVDNRVVLPMEMTIRMLISSEDVLHSWAVPSLGLKTDAIPGRLNQTTLMAMRPGLYYGQCSEICGSNHSFMPIVLEMVPLSYFETWSALMV.

The Mitochondrial intermembrane segment spans residues 1–14 (MAYPFQLGLQDATS). Residues 15-45 (PIMEELLHFHDHTLMIVFLISSLVLYIISSM) traverse the membrane as a helical segment. The Mitochondrial matrix portion of the chain corresponds to 46-59 (LTTKLTHTSTMDAQ). Residues 60–87 (EVETVWTILPAIILVLIALPSLRILYMM) form a helical membrane-spanning segment. The Mitochondrial intermembrane segment spans residues 88 to 227 (DETNNPSLTV…YFETWSALMV (140 aa)). Residues His161, Cys196, Glu198, Cys200, His204, and Met207 each contribute to the Cu cation site. Glu198 lines the Mg(2+) pocket. Tyr218 bears the Phosphotyrosine mark.

This sequence belongs to the cytochrome c oxidase subunit 2 family. As to quaternary structure, component of the cytochrome c oxidase (complex IV, CIV), a multisubunit enzyme composed of 14 subunits. The complex is composed of a catalytic core of 3 subunits MT-CO1, MT-CO2 and MT-CO3, encoded in the mitochondrial DNA, and 11 supernumerary subunits COX4I, COX5A, COX5B, COX6A, COX6B, COX6C, COX7A, COX7B, COX7C, COX8 and NDUFA4, which are encoded in the nuclear genome. The complex exists as a monomer or a dimer and forms supercomplexes (SCs) in the inner mitochondrial membrane with NADH-ubiquinone oxidoreductase (complex I, CI) and ubiquinol-cytochrome c oxidoreductase (cytochrome b-c1 complex, complex III, CIII), resulting in different assemblies (supercomplex SCI(1)III(2)IV(1) and megacomplex MCI(2)III(2)IV(2)). Found in a complex with TMEM177, COA6, COX18, COX20, SCO1 and SCO2. Interacts with TMEM177 in a COX20-dependent manner. Interacts with COX20. Interacts with COX16. The cofactor is Cu cation.

It localises to the mitochondrion inner membrane. It carries out the reaction 4 Fe(II)-[cytochrome c] + O2 + 8 H(+)(in) = 4 Fe(III)-[cytochrome c] + 2 H2O + 4 H(+)(out). In terms of biological role, component of the cytochrome c oxidase, the last enzyme in the mitochondrial electron transport chain which drives oxidative phosphorylation. The respiratory chain contains 3 multisubunit complexes succinate dehydrogenase (complex II, CII), ubiquinol-cytochrome c oxidoreductase (cytochrome b-c1 complex, complex III, CIII) and cytochrome c oxidase (complex IV, CIV), that cooperate to transfer electrons derived from NADH and succinate to molecular oxygen, creating an electrochemical gradient over the inner membrane that drives transmembrane transport and the ATP synthase. Cytochrome c oxidase is the component of the respiratory chain that catalyzes the reduction of oxygen to water. Electrons originating from reduced cytochrome c in the intermembrane space (IMS) are transferred via the dinuclear copper A center (CU(A)) of subunit 2 and heme A of subunit 1 to the active site in subunit 1, a binuclear center (BNC) formed by heme A3 and copper B (CU(B)). The BNC reduces molecular oxygen to 2 water molecules using 4 electrons from cytochrome c in the IMS and 4 protons from the mitochondrial matrix. This is Cytochrome c oxidase subunit 2 (MT-CO2) from Chrysocyon brachyurus (Maned wolf).